A 384-amino-acid chain; its full sequence is Lipoyl synthase 2, chloroplastic (384 aa).

Residues 1–48 (MAAYCSRVYHHHPVSPSTMQGSLARPSIHAGSASLTFRARPNSVSIVR) constitute a chloroplast transit peptide. 7 residues coordinate [4Fe-4S] cluster: Cys108, Cys113, Cys119, Cys145, Cys149, Cys152, and Ser360. Residues 128–349 (GDGDGIATAT…KEYGESLGFL (222 aa)) form the Radical SAM core domain.

Belongs to the radical SAM superfamily. Lipoyl synthase family. [4Fe-4S] cluster serves as cofactor.

The protein resides in the plastid. Its subcellular location is the chloroplast. It carries out the reaction [[Fe-S] cluster scaffold protein carrying a second [4Fe-4S](2+) cluster] + N(6)-octanoyl-L-lysyl-[protein] + 2 oxidized [2Fe-2S]-[ferredoxin] + 2 S-adenosyl-L-methionine + 4 H(+) = [[Fe-S] cluster scaffold protein] + N(6)-[(R)-dihydrolipoyl]-L-lysyl-[protein] + 4 Fe(3+) + 2 hydrogen sulfide + 2 5'-deoxyadenosine + 2 L-methionine + 2 reduced [2Fe-2S]-[ferredoxin]. Its pathway is protein modification; protein lipoylation via endogenous pathway; protein N(6)-(lipoyl)lysine from octanoyl-[acyl-carrier-protein]: step 2/2. In terms of biological role, catalyzes the radical-mediated insertion of two sulfur atoms into the C-6 and C-8 positions of the octanoyl moiety bound to the lipoyl domains of lipoate-dependent enzymes, thereby converting the octanoylated domains into lipoylated derivatives. The sequence is that of Lipoyl synthase 2, chloroplastic from Oryza sativa subsp. indica (Rice).